Consider the following 299-residue polypeptide: Transcription factor srbB (299 aa).

Disordered regions lie at residues M1–S33 and I81–K204. Positions P161–P170 are enriched in low complexity. Residues R188 to G199 show a composition bias toward polar residues. The basic motif stretch occupies residues A203–R216. In terms of domain architecture, bHLH spans A203–L264. A helix-loop-helix motif region spans residues T217–L264. Residues L254 to N281 adopt a coiled-coil conformation.

Its subcellular location is the nucleus. Key transcription factors critical for hypoxia adaptation and virulence. Plays a major role in regulation of heme biosynthesis and carbohydrate metabolism early in the response to hypoxia. This chain is Transcription factor srbB, found in Aspergillus fumigatus (strain ATCC MYA-4609 / CBS 101355 / FGSC A1100 / Af293) (Neosartorya fumigata).